The primary structure comprises 429 residues: uncharacterized protein (429 aa).

This is an uncharacterized protein from Mycobacterium tuberculosis (strain CDC 1551 / Oshkosh).